We begin with the raw amino-acid sequence, 355 residues long: MVSEAPPFWWRKPDWRAWGLSPFSFLYGRVAGHRMVHGRRASVPVPVICVGNFTVGGAGKTPTALALARAAKTKGLKPGFLSRGYGGSLDVTTVVDPHDHHATAVGDEPLLLAREALTVIARRRADGAERLVREGADLIIMDDGFQSAQLAIDYALVVIDATRGIGNGHLVPGGPVRAPLRTQLGYTSGLLKVGDGNAADRIVRLAARAGKPFFSASIKTLGQEDLQGRKVLAFAGIADPTKFFRTVETLGAGIAVRRSFGDHEHLEEDEIADILDVADRDGLEIVTTSKDYVRLIGHHGRADELLARCRVIEIAMVFDDPHAPELIIDRAIAAARERRLREGWTGKTLLPSGEK.

Residue 54 to 61 (TVGGAGKT) coordinates ATP.

Belongs to the LpxK family.

It carries out the reaction a lipid A disaccharide + ATP = a lipid IVA + ADP + H(+). It functions in the pathway glycolipid biosynthesis; lipid IV(A) biosynthesis; lipid IV(A) from (3R)-3-hydroxytetradecanoyl-[acyl-carrier-protein] and UDP-N-acetyl-alpha-D-glucosamine: step 6/6. Functionally, transfers the gamma-phosphate of ATP to the 4'-position of a tetraacyldisaccharide 1-phosphate intermediate (termed DS-1-P) to form tetraacyldisaccharide 1,4'-bis-phosphate (lipid IVA). This is Tetraacyldisaccharide 4'-kinase from Rhizobium rhizogenes (strain K84 / ATCC BAA-868) (Agrobacterium radiobacter).